The primary structure comprises 385 residues: A-type ATP synthase subunit C (385 aa).

The protein belongs to the V-ATPase V0D/AC39 subunit family. In terms of assembly, has multiple subunits with at least A(3), B(3), C, D, E, F, H, I and proteolipid K(x).

The protein resides in the cell membrane. Functionally, component of the A-type ATP synthase that produces ATP from ADP in the presence of a proton gradient across the membrane. This is A-type ATP synthase subunit C from Methanosphaera stadtmanae (strain ATCC 43021 / DSM 3091 / JCM 11832 / MCB-3).